A 190-amino-acid polypeptide reads, in one-letter code: Guanylate kinase (190 aa).

The 181-residue stretch at 8–188 folds into the Guanylate kinase-like domain; sequence GRLVILAGPS…AVKAIEDVLL (181 aa). An ATP-binding site is contributed by 15–22; the sequence is GPSAVGKS.

Belongs to the guanylate kinase family.

It localises to the cytoplasm. It carries out the reaction GMP + ATP = GDP + ADP. Functionally, essential for recycling GMP and indirectly, cGMP. The protein is Guanylate kinase of Corynebacterium glutamicum (strain ATCC 13032 / DSM 20300 / JCM 1318 / BCRC 11384 / CCUG 27702 / LMG 3730 / NBRC 12168 / NCIMB 10025 / NRRL B-2784 / 534).